The following is a 205-amino-acid chain: Nitrophorin-7 (205 aa).

The first 20 residues, 1-20, serve as a signal peptide directing secretion; the sequence is MELYTALLAVTILSPSSIVG. Intrachain disulfides connect C25–C144 and C62–C193. D52 serves as a coordination point for histamine. Residues H80 and N91 each contribute to the heme site. A histamine-binding site is contributed by D154.

Belongs to the calycin superfamily. Nitrophorin family. Forms oligomers (at pH 5.5). Heme b serves as cofactor. As to expression, expressed in the endothelial cells of the salivary glands.

Its subcellular location is the secreted. The enzyme catalyses 3 nitrite + 2 H(+) = 2 nitric oxide + nitrate + H2O. Its function is as follows. Converts nitrite as the sole substrate to form nitric oxide gas (NO). NO(2-) serves both as an electron donor and as an electron acceptor. Binds to negatively charged cell surfaces of activated platelets; binds to L-a-phosphatidyl-L-serine (PS)-bearing phospholipid membranes. Once bound on an activated platelet, NP7 releases its stored nitric oxide gas (NO) into the victim's tissues while feeding, resulting in vasodilation and inhibition of platelet aggregation. Also acts as an anticoagulant by blocking coagulation-factor binding sites. Has antihistamine activity; binds histamine with high affinity. The sequence is that of Nitrophorin-7 from Rhodnius prolixus (Triatomid bug).